The sequence spans 105 residues: Nucleoid-associated protein MW0434 (105 aa).

The segment at 1 to 33 is disordered; that stretch reads MRGGGNMQQMMKQMQKMQKKMAQEQEKLKEERI. The segment covering 7-16 has biased composition (low complexity); sequence MQQMMKQMQK. The segment covering 21-33 has biased composition (basic and acidic residues); it reads MAQEQEKLKEERI.

This sequence belongs to the YbaB/EbfC family. Homodimer.

The protein localises to the cytoplasm. Its subcellular location is the nucleoid. In terms of biological role, binds to DNA and alters its conformation. May be involved in regulation of gene expression, nucleoid organization and DNA protection. This Staphylococcus aureus (strain MW2) protein is Nucleoid-associated protein MW0434.